Consider the following 542-residue polypeptide: Chaperonin GroEL 2 (542 aa).

ATP-binding positions include 30-33 (TLGP), lysine 51, 87-91 (DGTTT), glycine 415, and aspartate 496.

It belongs to the chaperonin (HSP60) family. As to quaternary structure, forms a cylinder of 14 subunits composed of two heptameric rings stacked back-to-back. Interacts with the co-chaperonin GroES.

It localises to the cytoplasm. The enzyme catalyses ATP + H2O + a folded polypeptide = ADP + phosphate + an unfolded polypeptide.. In terms of biological role, together with its co-chaperonin GroES, plays an essential role in assisting protein folding. The GroEL-GroES system forms a nano-cage that allows encapsulation of the non-native substrate proteins and provides a physical environment optimized to promote and accelerate protein folding. The chain is Chaperonin GroEL 2 from Chelativorans sp. (strain BNC1).